A 217-amino-acid polypeptide reads, in one-letter code: Vesicle transport through interaction with t-SNAREs homolog 1A (217 aa).

Topologically, residues 1 to 192 (MSSDFEGYEQ…GMLRRIIQNR (192 aa)) are cytoplasmic. 2 coiled-coil regions span residues 31–92 (PDEK…KRSR) and 112–178 (ENQR…GKSS). A helical; Anchor for type IV membrane protein transmembrane segment spans residues 193–213 (ILLVILGIIVVIAILTAIAFF). Residues 214 to 217 (VKGH) are Vesicular-facing.

It belongs to the VTI1 family. In terms of assembly, interacts with distinct SNARE complexes that contain either STX5 or STX6. Interacts with NAPA and, to a lesser extent, with NAPG. Identified in a complex containing STX6, STX12, VAMP4 and VTI1A. In terms of tissue distribution, widely expressed.

The protein localises to the golgi apparatus membrane. Functionally, V-SNARE that mediates vesicle transport pathways through interactions with t-SNAREs on the target membrane. These interactions are proposed to mediate aspects of the specificity of vesicle trafficking and to promote fusion of the lipid bilayers. Involved in vesicular transport from the late endosomes to the trans-Golgi network. Along with VAMP7, involved in an non-conventional RAB1-dependent traffic route to the cell surface used by KCNIP1 and KCND2. May be concerned with increased secretion of cytokines associated with cellular senescence. The protein is Vesicle transport through interaction with t-SNAREs homolog 1A (Vti1a) of Mus musculus (Mouse).